A 647-amino-acid chain; its full sequence is MTYEIHPLPIILMSDFDIVVIGAGHAGCEAALAAARLGHKTLLAVMNVDTIGAMSCNPAIGGLAKGHLVREIDALGGEMARVIDATSIQFRRLNTSKGPAVQSSRAQADRLLYRLQMKSVIEHQENLTVSQTEVNGFIVEDGKITGVTTTIDEKISVKAAIVATGTFLNGLVHIGLKNFPAGRLGDGPSTGLADWFYDNGFAVGRMKTGTVPRIDSLTIDYSELEAQESDMPPAHFSFDSQGKGYTLPQLPCYITYTNEKTHEIIRKGIDQSPLYAGIIQGIGARYCPSIEDKIMRFPEKDRHQVFLEPEGLDTVEVYPNGLPTSLPLEVQIEMLQSIKGLENARIIRPGYAIEYDYIDPLGLRPSLATKKIENLYLAGQINGTSGYEEAAAQGLMAGINATRYLEEREPLILDRSQAYIGVLIDDLVTCGTKEPYRLFTSRAEYRLLLREDNADSRLCQIGKDIGLLDEDKHQRYLIKQAAIDAGCATLDAISIKPTAEVNRILNDAASADLKQKSALSSLLRRPEINITFLQKLPLTAGDKEAVIALANSAVCQEVQVRIKFKGYLQRQEEQVQRFKRMETLKLPEDLNYAQLSGLSNEVVEKLSTIRPISLGQASRISGITPAAVSVLQVHLRKLNYLKSNDKI.

FAD is bound by residues 22 to 27 (GAGHAG), Val134, and Ser189. 283-297 (GARYCPSIEDKIMRF) provides a ligand contact to NAD(+). Gln380 is a binding site for FAD.

It belongs to the MnmG family. Homodimer. Heterotetramer of two MnmE and two MnmG subunits. FAD is required as a cofactor.

The protein localises to the cytoplasm. NAD-binding protein involved in the addition of a carboxymethylaminomethyl (cmnm) group at the wobble position (U34) of certain tRNAs, forming tRNA-cmnm(5)s(2)U34. The polypeptide is tRNA uridine 5-carboxymethylaminomethyl modification enzyme MnmG (Desulfotalea psychrophila (strain LSv54 / DSM 12343)).